Reading from the N-terminus, the 159-residue chain is Large ribosomal subunit protein uL22 (159 aa).

It belongs to the universal ribosomal protein uL22 family. Part of the 50S ribosomal subunit.

Its function is as follows. This protein binds specifically to 23S rRNA. It makes multiple contacts with different domains of the 23S rRNA in the assembled 50S subunit and ribosome. In terms of biological role, the globular domain of the protein is located near the polypeptide exit tunnel on the outside of the subunit, while an extended beta-hairpin is found that lines the wall of the exit tunnel in the center of the 70S ribosome. The protein is Large ribosomal subunit protein uL22 of Methanopyrus kandleri (strain AV19 / DSM 6324 / JCM 9639 / NBRC 100938).